We begin with the raw amino-acid sequence, 322 residues long: MIFSTLEHILTHISFSIVSIVITLHLITLLGNEIIKPYDSSEKGMIATFLCLTGLLTTRWIYSGHFPLSDLYESLIFLSWSFSLIHIVPYFKIRKNDLTTITASITIFTQGFATSGLLNEIHKPTILVPALQSEWLIMHVSMMILSYAALLCGSLLSVALLVITFRNIFYSSKSNNLLKLNESFSFGEIQYKNERNNIFQKTSFFSDKNYYKAQFIQQLDYWSYRVISLGFIFLTIGILSGAVWANEAWGSYWSWDPKETWAFITWIVFAIYLHTRTNKNLQGANSAIVATLGFLIIWICYFGVNLLGIGLHSYGSFTLTYS.

Helical transmembrane passes span 9–29, 44–64, 71–91, 98–118, 143–163, 226–246, 253–273, and 287–307; these read ILTH…LITL, GMIA…IYSG, LYES…VPYF, LTTI…SGLL, MILS…LLVI, VISL…VWAN, WSWD…AIYL, and AIVA…VNLL.

This sequence belongs to the CcmF/CycK/Ccl1/NrfE/CcsA family. May interact with Ccs1.

Its subcellular location is the plastid. It localises to the chloroplast thylakoid membrane. Functionally, required during biogenesis of c-type cytochromes (cytochrome c6 and cytochrome f) at the step of heme attachment. This Helianthus annuus (Common sunflower) protein is Cytochrome c biogenesis protein CcsA.